A 548-amino-acid polypeptide reads, in one-letter code: Chaperonin GroEL (548 aa).

ATP contacts are provided by residues 30–33, K51, 87–91, G415, and D495; these read TLGP and DGTTT.

It belongs to the chaperonin (HSP60) family. Forms a cylinder of 14 subunits composed of two heptameric rings stacked back-to-back. Interacts with the co-chaperonin GroES.

Its subcellular location is the cytoplasm. It carries out the reaction ATP + H2O + a folded polypeptide = ADP + phosphate + an unfolded polypeptide.. Together with its co-chaperonin GroES, plays an essential role in assisting protein folding. The GroEL-GroES system forms a nano-cage that allows encapsulation of the non-native substrate proteins and provides a physical environment optimized to promote and accelerate protein folding. This Yersinia pseudotuberculosis serotype O:1b (strain IP 31758) protein is Chaperonin GroEL.